We begin with the raw amino-acid sequence, 157 residues long: Crossover junction endodeoxyribonuclease RuvC (157 aa).

Catalysis depends on residues Asp7, Glu67, and Asp139. Asp7, Glu67, and Asp139 together coordinate Mg(2+).

This sequence belongs to the RuvC family. As to quaternary structure, homodimer which binds Holliday junction (HJ) DNA. The HJ becomes 2-fold symmetrical on binding to RuvC with unstacked arms; it has a different conformation from HJ DNA in complex with RuvA. In the full resolvosome a probable DNA-RuvA(4)-RuvB(12)-RuvC(2) complex forms which resolves the HJ. Mg(2+) is required as a cofactor.

It localises to the cytoplasm. The catalysed reaction is Endonucleolytic cleavage at a junction such as a reciprocal single-stranded crossover between two homologous DNA duplexes (Holliday junction).. In terms of biological role, the RuvA-RuvB-RuvC complex processes Holliday junction (HJ) DNA during genetic recombination and DNA repair. Endonuclease that resolves HJ intermediates. Cleaves cruciform DNA by making single-stranded nicks across the HJ at symmetrical positions within the homologous arms, yielding a 5'-phosphate and a 3'-hydroxyl group; requires a central core of homology in the junction. The consensus cleavage sequence is 5'-(A/T)TT(C/G)-3'. Cleavage occurs on the 3'-side of the TT dinucleotide at the point of strand exchange. HJ branch migration catalyzed by RuvA-RuvB allows RuvC to scan DNA until it finds its consensus sequence, where it cleaves and resolves the cruciform DNA. The protein is Crossover junction endodeoxyribonuclease RuvC of Prochlorococcus marinus (strain MIT 9301).